Here is a 46-residue protein sequence, read N- to C-terminus: Defensin Tk-AMP-D5 (46 aa).

4 cysteine pairs are disulfide-bonded: Cys-3–Cys-46, Cys-14–Cys-34, Cys-20–Cys-40, and Cys-24–Cys-42.

Plant defense peptide. The protein is Defensin Tk-AMP-D5 of Triticum kiharae (Wheat).